A 295-amino-acid chain; its full sequence is Tyrosine recombinase XerD (295 aa).

Residues 1–85 (MNTIIEEYLN…TIRSFHQFAL (85 aa)) enclose the Core-binding (CB) domain. Residues 106-289 (KLPDVLEIDE…SKSQIRKMYT (184 aa)) enclose the Tyr recombinase domain. Residues Arg-146, Lys-170, His-241, Arg-244, and His-267 contribute to the active site. The O-(3'-phospho-DNA)-tyrosine intermediate role is filled by Tyr-276.

It belongs to the 'phage' integrase family. XerD subfamily. In terms of assembly, forms a cyclic heterotetrameric complex composed of two molecules of XerC and two molecules of XerD.

It localises to the cytoplasm. Its function is as follows. Site-specific tyrosine recombinase, which acts by catalyzing the cutting and rejoining of the recombining DNA molecules. The XerC-XerD complex is essential to convert dimers of the bacterial chromosome into monomers to permit their segregation at cell division. It also contributes to the segregational stability of plasmids. The protein is Tyrosine recombinase XerD of Staphylococcus epidermidis (strain ATCC 12228 / FDA PCI 1200).